The chain runs to 387 residues: 8-amino-7-oxononanoate synthase (387 aa).

Arginine 19 contacts substrate. A pyridoxal 5'-phosphate-binding site is contributed by 106 to 107 (GY). Histidine 131 lines the substrate pocket. Pyridoxal 5'-phosphate-binding residues include serine 177, histidine 205, and threonine 234. Lysine 237 is modified (N6-(pyridoxal phosphate)lysine). Threonine 351 contributes to the substrate binding site.

It belongs to the class-II pyridoxal-phosphate-dependent aminotransferase family. BioF subfamily. As to quaternary structure, homodimer. Requires pyridoxal 5'-phosphate as cofactor.

The enzyme catalyses 6-carboxyhexanoyl-[ACP] + L-alanine + H(+) = (8S)-8-amino-7-oxononanoate + holo-[ACP] + CO2. It functions in the pathway cofactor biosynthesis; biotin biosynthesis. Catalyzes the decarboxylative condensation of pimeloyl-[acyl-carrier protein] and L-alanine to produce 8-amino-7-oxononanoate (AON), [acyl-carrier protein], and carbon dioxide. The protein is 8-amino-7-oxononanoate synthase of Methylococcus capsulatus (strain ATCC 33009 / NCIMB 11132 / Bath).